We begin with the raw amino-acid sequence, 30 residues long: Proteinase inhibitor CeKI (30 aa).

This sequence belongs to the protease inhibitor I3 (leguminous Kunitz-type inhibitor) family.

In terms of biological role, potent inhibitor of serine proteases plasma kallikrein, plasmin and coagulation factor XIIa. Weak inhibitor of serine proteases trypsin and coagulation factor Xa. Does not inhibit the serine proteases chymotrypsin, elastase or thrombin. Inhibits kinin release from HMW-kininogen by kallikrein in vitro. This is Proteinase inhibitor CeKI from Paubrasilia echinata (Pau Brasil).